A 757-amino-acid chain; its full sequence is LPS-assembly protein LptD (757 aa).

The signal sequence occupies residues 1 to 21 (MRRLIPIAITGSLLWGAAVQA).

This sequence belongs to the LptD family. Component of the lipopolysaccharide transport and assembly complex. Interacts with LptE and LptA.

It is found in the cell outer membrane. Its function is as follows. Together with LptE, is involved in the assembly of lipopolysaccharide (LPS) at the surface of the outer membrane. In Alkalilimnicola ehrlichii (strain ATCC BAA-1101 / DSM 17681 / MLHE-1), this protein is LPS-assembly protein LptD.